The chain runs to 531 residues: Putative UDP-glucuronosyltransferase ugt-46 (531 aa).

A signal peptide spans 1–17 (MRLIFVLLATFVNAAFS). N-linked (GlcNAc...) asparagine glycosylation occurs at Asn304. A helical membrane pass occupies residues 493–513 (VIIPVFWLSISLVIPTIFGWY).

Belongs to the UDP-glycosyltransferase family.

The protein resides in the membrane. It catalyses the reaction glucuronate acceptor + UDP-alpha-D-glucuronate = acceptor beta-D-glucuronoside + UDP + H(+). The protein is Putative UDP-glucuronosyltransferase ugt-46 (ugt-46) of Caenorhabditis elegans.